The sequence spans 525 residues: GMP synthase [glutamine-hydrolyzing] (525 aa).

Positions 12–206 constitute a Glutamine amidotransferase type-1 domain; it reads RILIIDFGSQ…THGICGCGGD (195 aa). Cysteine 90 acts as the Nucleophile in catalysis. Residues histidine 180 and glutamate 182 contribute to the active site. Residues 207–399 enclose the GMPS ATP-PPase domain; it reads WTMAAFKDQA…LGLPDEMVGR (193 aa). Residue 234–240 coordinates ATP; it reads SGGVDSS.

As to quaternary structure, homodimer.

It carries out the reaction XMP + L-glutamine + ATP + H2O = GMP + L-glutamate + AMP + diphosphate + 2 H(+). It participates in purine metabolism; GMP biosynthesis; GMP from XMP (L-Gln route): step 1/1. Functionally, catalyzes the synthesis of GMP from XMP. The sequence is that of GMP synthase [glutamine-hydrolyzing] from Rhodospirillum rubrum (strain ATCC 11170 / ATH 1.1.1 / DSM 467 / LMG 4362 / NCIMB 8255 / S1).